We begin with the raw amino-acid sequence, 183 residues long: Adenine phosphoribosyltransferase (183 aa).

The protein belongs to the purine/pyrimidine phosphoribosyltransferase family. As to quaternary structure, homodimer.

The protein resides in the cytoplasm. It catalyses the reaction AMP + diphosphate = 5-phospho-alpha-D-ribose 1-diphosphate + adenine. Its pathway is purine metabolism; AMP biosynthesis via salvage pathway; AMP from adenine: step 1/1. Catalyzes a salvage reaction resulting in the formation of AMP, that is energically less costly than de novo synthesis. This chain is Adenine phosphoribosyltransferase, found in Proteus mirabilis (strain HI4320).